The sequence spans 100 residues: Integration host factor subunit alpha (100 aa).

This sequence belongs to the bacterial histone-like protein family. In terms of assembly, heterodimer of an alpha and a beta chain.

Its function is as follows. This protein is one of the two subunits of integration host factor, a specific DNA-binding protein that functions in genetic recombination as well as in transcriptional and translational control. In Caulobacter sp. (strain K31), this protein is Integration host factor subunit alpha.